We begin with the raw amino-acid sequence, 419 residues long: Phosphatidylinositol 5-phosphate 4-kinase type-2 gamma (419 aa).

In terms of domain architecture, PIPK spans 46-418; the sequence is ASDPLISVFM…RFLEFVTNIF (373 aa). The span at 299–310 shows a compositional bias: acidic residues; sequence QEEEEDLEEDHT. The segment at 299–320 is disordered; the sequence is QEEEEDLEEDHTENESSPHMNV.

Post-translationally, phosphorylated, phosphorylation is induced by EGF.

The protein resides in the endoplasmic reticulum. Its subcellular location is the cytoplasm. The enzyme catalyses a 1,2-diacyl-sn-glycero-3-phospho-(1D-myo-inositol-5-phosphate) + ATP = a 1,2-diacyl-sn-glycero-3-phospho-(1D-myo-inositol-4,5-bisphosphate) + ADP + H(+). The catalysed reaction is 1,2-dihexadecanoyl-sn-glycero-3-phospho-(1D-myo-inositol-5-phosphate) + ATP = 1,2-dihexadecanoyl-sn-glycero-3-phospho-(1D-myo-inositol-4,5-bisphosphate) + ADP + H(+). It catalyses the reaction 1,2-dihexadecanoyl-sn-glycero-3-phospho-(1D-myo-inositol-5-phosphate) + GTP = 1,2-dihexadecanoyl-sn-glycero-3-phospho-(1D-myo-inositol-4,5-bisphosphate) + GDP + H(+). Phosphatidylinositol 5-phosphate 4-kinase with low enzymatic activity. May be a GTP sensor, has higher GTP-dependent kinase activity than ATP-dependent kinase activity. In Xenopus tropicalis (Western clawed frog), this protein is Phosphatidylinositol 5-phosphate 4-kinase type-2 gamma (pip4k2c).